The primary structure comprises 418 residues: Actin-like protein C08B11.6 (418 aa).

Belongs to the actin family. ARP6 subfamily.

The protein resides in the cytoplasm. Its subcellular location is the cytoskeleton. This Caenorhabditis elegans protein is Actin-like protein C08B11.6 (arp-6).